The primary structure comprises 441 residues: EP1-like glycoprotein 3 (441 aa).

A signal peptide spans 1–22; that stretch reads MKFSITLALCFTLSIFLIGSQA. The Bulb-type lectin domain occupies 29-159; that stretch reads QFRVVNEGGY…SGKFVWQSFD (131 aa). 3 N-linked (GlcNAc...) asparagine glycosylation sites follow: N102, N258, and N269. The WD repeat unit spans residues 254 to 296; the sequence is GSKFNVSTFLSRPKHNATLSFIRLESDGNIRVWSYSTLATSTA. The PAN domain occupies 356-433; sequence CDPKTFHYFK…SSLVAYVKAP (78 aa). 2 disulfides stabilise this stretch: C387-C409 and C391-C397.

Post-translationally, phosphorylated on tyrosine.

The protein resides in the secreted. It is found in the cell wall. Functionally, may be involved in a cell-to cell programmed cell death (PCD) signaling mechanism. The protein is EP1-like glycoprotein 3 of Arabidopsis thaliana (Mouse-ear cress).